A 130-amino-acid chain; its full sequence is Small ribosomal subunit protein uS9 (130 aa).

Belongs to the universal ribosomal protein uS9 family.

In Bacillus licheniformis (strain ATCC 14580 / DSM 13 / JCM 2505 / CCUG 7422 / NBRC 12200 / NCIMB 9375 / NCTC 10341 / NRRL NRS-1264 / Gibson 46), this protein is Small ribosomal subunit protein uS9.